The primary structure comprises 193 residues: Bcl-2-binding component 3, isoforms 1/2 (193 aa).

Disordered regions lie at residues 1 to 28 (MARARQEGSSPEPVEGLARDGPRPFPLG) and 71 to 138 (ALGG…REIG). Ser10 is modified (phosphoserine). Positions 71–82 (ALGGSRWPGGPR) are enriched in low complexity. The BH3 signature appears at 137 to 151 (IGAQLRRMADDLNAQ).

This sequence belongs to the Bcl-2 family. As to quaternary structure, interacts with MCL1 and BCL2A1. Interacts (via BH3 domain) with BCL2. Interacts with BCL2L1/BCL-XL. Interacts (via BH3 domain) with NOL3/ARC (via CARD domain); this interaction prevents BBC3 association with BCL2 and results in CASP8 activation. Ubiquitously expressed.

It is found in the mitochondrion. Functionally, essential mediator of p53/TP53-dependent and p53/TP53-independent apoptosis. Promotes partial unfolding of BCL2L1 and dissociation of BCL2L1 from p53/TP53, releasing the bound p53/TP53 to induce apoptosis. Regulates ER stress-induced neuronal apoptosis. This chain is Bcl-2-binding component 3, isoforms 1/2 (BBC3), found in Homo sapiens (Human).